The chain runs to 226 residues: 7-carboxy-7-deazaguanine synthase (226 aa).

Residues 10–12 (LQG) and R25 contribute to the substrate site. Positions 16 to 221 (YTGIPCIFVR…LQTHKFIWTP (206 aa)) constitute a Radical SAM core domain. 3 residues coordinate [4Fe-4S] cluster: C29, C33, and C36. Residue S38 participates in Mg(2+) binding. T69 provides a ligand contact to substrate. G71 contacts S-adenosyl-L-methionine.

It belongs to the radical SAM superfamily. 7-carboxy-7-deazaguanine synthase family. Homodimer. [4Fe-4S] cluster serves as cofactor. S-adenosyl-L-methionine is required as a cofactor. It depends on Mg(2+) as a cofactor.

It catalyses the reaction 6-carboxy-5,6,7,8-tetrahydropterin + H(+) = 7-carboxy-7-deazaguanine + NH4(+). It participates in purine metabolism; 7-cyano-7-deazaguanine biosynthesis. Catalyzes the complex heterocyclic radical-mediated conversion of 6-carboxy-5,6,7,8-tetrahydropterin (CPH4) to 7-carboxy-7-deazaguanine (CDG), a step common to the biosynthetic pathways of all 7-deazapurine-containing compounds. In Koribacter versatilis (strain Ellin345), this protein is 7-carboxy-7-deazaguanine synthase.